Reading from the N-terminus, the 99-residue chain is Large ribosomal subunit protein uL23 (99 aa).

This sequence belongs to the universal ribosomal protein uL23 family. Part of the 50S ribosomal subunit. Contacts protein L29, and trigger factor when it is bound to the ribosome.

Functionally, one of the early assembly proteins it binds 23S rRNA. One of the proteins that surrounds the polypeptide exit tunnel on the outside of the ribosome. Forms the main docking site for trigger factor binding to the ribosome. This Rhodopseudomonas palustris (strain BisB18) protein is Large ribosomal subunit protein uL23.